We begin with the raw amino-acid sequence, 218 residues long: Putative pre-16S rRNA nuclease (218 aa).

This sequence belongs to the YqgF nuclease family.

The protein resides in the cytoplasm. Functionally, could be a nuclease involved in processing of the 5'-end of pre-16S rRNA. This is Putative pre-16S rRNA nuclease from Thermotoga maritima (strain ATCC 43589 / DSM 3109 / JCM 10099 / NBRC 100826 / MSB8).